The following is a 211-amino-acid chain: Metalloproteinase inhibitor 3 (211 aa).

A signal peptide spans 1 to 23 (MTPWLGLVVLLSCWSLGHWGAEA). Position 24 (C24) interacts with Zn(2+). Involved in metalloproteinase-binding stretches follow at residues 24–27 (CTCS) and 88–89 (ES). 6 disulfide bridges follow: C24–C91, C26–C118, C36–C143, C145–C192, C150–C155, and C163–C184. The NTR domain maps to 24 to 143 (CTCSPSHPQD…GLNYRYHLGC (120 aa)). A mediates interaction with EFEMP1 region spans residues 105–188 (TGRVYEGKMY…SKHYACIRQK (84 aa)).

Belongs to the protease inhibitor I35 (TIMP) family. In terms of assembly, interacts with EFEMP1. Interacts with KDR. Highest levels are found in kidney, lung and brain followed by ovary and uterus. Low levels are found in bone.

Its subcellular location is the secreted. The protein resides in the extracellular space. It is found in the extracellular matrix. In terms of biological role, mediates a variety of processes including matrix regulation and turnover, inflammation, and angiogenesis, through reversible inhibition of zinc protease superfamily enzymes, primarily matrix metalloproteinases (MMPs). Regulates extracellular matrix (ECM) remodeling through inhibition of matrix metalloproteinases (MMP) including MMP-1, MMP-2, MMP-3, MMP-7, MMP-9, MMP-13, MMP-14 and MMP-15. Additionally, modulates the processing of amyloid precursor protein (APP) and apolipoprotein E receptor ApoER2 by inhibiting two alpha-secretases ADAM10 and ADAM17. Functions as a tumor suppressor and a potent inhibitor of angiogenesis. Exerts its anti-angiogenic effect by directly interacting with vascular endothelial growth factor (VEGF) receptor-2/KDR, preventing its binding to the VEGFA ligand. Selectively induces apoptosis in angiogenic endothelial cells through a caspase-independent cell death pathway. Mechanistically, inhibits matrix-induced focal adhesion kinase PTK2 tyrosine phosphorylation and association with paxillin/PXN and disrupts the incorporation of ITGB3, PTK2 and PXN into focal adhesion contacts on the matrix. In Mus musculus (Mouse), this protein is Metalloproteinase inhibitor 3 (Timp3).